Consider the following 403-residue polypeptide: Cytoplasmic tRNA 2-thiolation protein 2 (403 aa).

This sequence belongs to the CTU2/NCS2 family.

It localises to the cytoplasm. It functions in the pathway tRNA modification; 5-methoxycarbonylmethyl-2-thiouridine-tRNA biosynthesis. In terms of biological role, plays a central role in 2-thiolation of mcm(5)S(2)U at tRNA wobble positions of tRNA(Lys), tRNA(Glu) and tRNA(Gln). May act by forming a heterodimer with NCS6/CTU1 that ligates sulfur from thiocarboxylated URM1 onto the uridine of tRNAs at wobble position. The sequence is that of Cytoplasmic tRNA 2-thiolation protein 2 from Drosophila willistoni (Fruit fly).